The following is a 399-amino-acid chain: Elongation factor Tu 1 (399 aa).

The 192-residue stretch at 17-208 folds into the tr-type G domain; that stretch reads KPHVNVGTIG…LDDYVEVPPR (192 aa). The tract at residues 26-33 is G1; that stretch reads GHVDHGKT. 26–33 is a GTP binding site; that stretch reads GHVDHGKT. Position 33 (T33) interacts with Mg(2+). Residues 62 to 66 are G2; it reads GITIA. The tract at residues 83–86 is G3; the sequence is DCPG. GTP-binding positions include 83–87 and 138–141; these read DCPGH and NKAD. Residues 138–141 are G4; sequence NKAD. The tract at residues 175–177 is G5; that stretch reads SAL.

It belongs to the TRAFAC class translation factor GTPase superfamily. Classic translation factor GTPase family. EF-Tu/EF-1A subfamily. As to quaternary structure, monomer.

Its subcellular location is the cytoplasm. It carries out the reaction GTP + H2O = GDP + phosphate + H(+). In terms of biological role, GTP hydrolase that promotes the GTP-dependent binding of aminoacyl-tRNA to the A-site of ribosomes during protein biosynthesis. This Wolbachia sp. subsp. Brugia malayi (strain TRS) protein is Elongation factor Tu 1.